The primary structure comprises 402 residues: MPTGTVARAWVLVLALWGAVAGGQNITARIGEPLMLSCKGAPKKPTQKLEWKLNTGRTEAWKVLSPQGDPWDSVARILPNGSLLLPAIGIVDEGTFRCRATNRLGKEVKSNYRVRVYQIPGKPEIVNPASELTANVPNKVGTCVSEGSYPAGTLSWHLDGKPLIPDGKGTVVKEETRRHPETGLFTLRSELTVTPAQGGTTPTYSCSFSLGLPRRRPLNTAPIQPRVREPLPPEGIQLLVEPEGGTVAPGGTVTLTCAISAQPPPQIHWIKDGTPLPLAPSPVLLLPEVGHEDEGIYSCVATHPSHGPQESPPVNIRVTETGDEGQAAGSVDGSGLGTLALALGILGGLGIAALLIGAILWRKRQPRLEERKAPESQEDEEERAELNQSEEAEMPENGAGGP.

The N-terminal stretch at 1 to 22 (MPTGTVARAWVLVLALWGAVAG) is a signal peptide. In terms of domain architecture, Ig-like V-type spans 23–109 (GQNITARIGE…ATNRLGKEVK (87 aa)). Residues 23–341 (GQNITARIGE…DGSGLGTLAL (319 aa)) are Extracellular-facing. Residues Asn-25 and Asn-80 are each glycosylated (N-linked (GlcNAc...) asparagine). Cystine bridges form between Cys-38-Cys-98 and Cys-143-Cys-206. 2 Ig-like C2-type domains span residues 123–219 (PEIV…RPLN) and 233–315 (PEGI…PPVN). Residues 342-362 (ALGILGGLGIAALLIGAILWR) traverse the membrane as a helical segment. At 363–402 (KRQPRLEERKAPESQEDEEERAELNQSEEAEMPENGAGGP) the chain is on the cytoplasmic side. A disordered region spans residues 368 to 402 (LEERKAPESQEDEEERAELNQSEEAEMPENGAGGP). Ser-376 and Ser-389 each carry phosphoserine. Residues 376 to 394 (SQEDEEERAELNQSEEAEM) are compositionally biased toward acidic residues.

In terms of assembly, constitutive homodimer; disulfide-linked. Forms homooligomers. Interacts with S100A1 and APP. Interacts with S100B, S100A12 and S100A14. Interacts with TIRAP. Interacts with HMGB1. Interacts with LGP2; this interaction plays an important role in AGER-mediated pro-inflammatory responses and cytokine release. Interacts with double-strand break repair protein MRE11 which is a core component of the MRN complex; the interaction enhances MRE11 endonuclease activity and promotes DNA repair. Interacts with the MCM2-7 complex via interaction with complex member MCM2; the interaction is increased following DNA replication stress and stabilizes the MCM2-7 complex at replication forks. In terms of processing, phosphorylated on its cytoplasmic domain by PKCzeta/PRKCZ upon ligand binding. Phosphorylated by ATM following DNA damage. Targeted by the ubiquitin E3 ligase subunit FBXO10 to mediate its ubiquitination and degradation. Endothelial cells and cardiomyocytes. Expressed in brain.

Its subcellular location is the cell membrane. It is found in the cell projection. The protein localises to the phagocytic cup. The protein resides in the early endosome. It localises to the nucleus. In terms of biological role, cell surface pattern recognition receptor that senses endogenous stress signals with a broad ligand repertoire including advanced glycation end products, S100 proteins, high-mobility group box 1 protein/HMGB1, amyloid beta/APP oligomers, nucleic acids, histones, phospholipids and glycosaminoglycans. Advanced glycosylation end products are nonenzymatically glycosylated proteins which accumulate in vascular tissue in aging and at an accelerated rate in diabetes. These ligands accumulate at inflammatory sites during the pathogenesis of various diseases including diabetes, vascular complications, neurodegenerative disorders and cancers, and RAGE transduces their binding into pro-inflammatory responses. Upon ligand binding, uses TIRAP and MYD88 as adapters to transduce the signal ultimately leading to the induction of inflammatory cytokines IL6, IL8 and TNFalpha through activation of NF-kappa-B. Interaction with S100A12 on endothelium, mononuclear phagocytes, and lymphocytes triggers cellular activation, with generation of key pro-inflammatory mediators. Interaction with S100B after myocardial infarction may play a role in myocyte apoptosis by activating ERK1/2 and p53/TP53 signaling. Contributes to the translocation of amyloid-beta peptide (ABPP) across the cell membrane from the extracellular to the intracellular space in cortical neurons. ABPP-initiated RAGE signaling, especially stimulation of p38 mitogen-activated protein kinase (MAPK), has the capacity to drive a transport system delivering ABPP as a complex with RAGE to the intraneuronal space. Participates in endothelial albumin transcytosis together with HMGB1 through the RAGE/SRC/Caveolin-1 pathway, leading to endothelial hyperpermeability. Mediates the loading of HMGB1 in extracellular vesicles (EVs) that shuttle HMGB1 to hepatocytes by transferrin-mediated endocytosis and subsequently promote hepatocyte pyroptosis by activating the NLRP3 inflammasome. Binds to DNA and promotes extracellular hypomethylated DNA (CpG DNA) uptake by cells via the endosomal route to activate inflammatory responses. Mediates phagocytosis by non-professional phagocytes (NPP) and this is enhanced by binding to ligands including RNA, DNA, HMGB1 and histones. Promotes NPP-mediated phagocytosis of Saccharomyces cerevisiae spores by binding to RNA attached to the spore wall. Also promotes NPP-mediated phagocytosis of apoptotic cells. Following DNA damage, recruited to DNA double-strand break sites where it colocalizes with the MRN repair complex via interaction with double-strand break repair protein MRE11. Enhances the endonuclease activity of MRE11, promoting the end resection of damaged DNA. Promotes DNA damage repair in trophoblasts which enhances trophoblast invasion and contributes to placental development and maintenance. Protects cells from DNA replication stress by localizing to damaged replication forks where it stabilizes the MCM2-7 complex and promotes faithful progression of the replication fork. In Rattus norvegicus (Rat), this protein is Advanced glycosylation end product-specific receptor (Ager).